Consider the following 122-residue polypeptide: Small ribosomal subunit protein uS13 (122 aa).

Residues 95 to 122 (GLPVRGQRTHTNARTRKGKAKPIAGKKK) form a disordered region.

This sequence belongs to the universal ribosomal protein uS13 family. As to quaternary structure, part of the 30S ribosomal subunit. Forms a loose heterodimer with protein S19. Forms two bridges to the 50S subunit in the 70S ribosome.

Its function is as follows. Located at the top of the head of the 30S subunit, it contacts several helices of the 16S rRNA. In the 70S ribosome it contacts the 23S rRNA (bridge B1a) and protein L5 of the 50S subunit (bridge B1b), connecting the 2 subunits; these bridges are implicated in subunit movement. Contacts the tRNAs in the A and P-sites. The polypeptide is Small ribosomal subunit protein uS13 (Zymomonas mobilis subsp. mobilis (strain ATCC 31821 / ZM4 / CP4)).